Reading from the N-terminus, the 330-residue chain is Beta-1,6-galactofuranosyltransferase WbbI (330 aa).

The protein localises to the cytoplasm. It functions in the pathway bacterial outer membrane biogenesis; lipopolysaccharide biosynthesis. In terms of biological role, involved in the transfer of galactofuranose (Galf) onto an alpha-D-gluco-configured acceptor substrate to form a beta-1,6-linkage. It uses n-octyl alpha-D-glucopyranoside as an acceptor substrate for the addition of galactofuranose from the donor substrate UDP-galactofuranose. It is not able to use beta-D-glucopyranoside isomers. This Escherichia coli (strain K12) protein is Beta-1,6-galactofuranosyltransferase WbbI (wbbI).